A 172-amino-acid chain; its full sequence is MVDKRESYTKEDLLASGRGELFGTKGPQLPAPNMLMMDRVVKMTETGGNFDKGYVEAELDINPDLWFFGCHFIGDPVMPGCLGLDAMWQLVGFYLGWLGGEGKGRALGVGEVKFTGQVLPTAKKVTYRIHFKRIVNRRLIMGLADGEVLVDGRLIYTASDLKVGLFQDTSAF.

His-71 is an active-site residue.

It belongs to the thioester dehydratase family. FabA subfamily. In terms of assembly, homodimer.

Its subcellular location is the cytoplasm. The catalysed reaction is a (3R)-hydroxyacyl-[ACP] = a (2E)-enoyl-[ACP] + H2O. It carries out the reaction (3R)-hydroxydecanoyl-[ACP] = (2E)-decenoyl-[ACP] + H2O. It catalyses the reaction (2E)-decenoyl-[ACP] = (3Z)-decenoyl-[ACP]. It participates in lipid metabolism; fatty acid biosynthesis. In terms of biological role, necessary for the introduction of cis unsaturation into fatty acids. Catalyzes the dehydration of (3R)-3-hydroxydecanoyl-ACP to E-(2)-decenoyl-ACP and then its isomerization to Z-(3)-decenoyl-ACP. Can catalyze the dehydratase reaction for beta-hydroxyacyl-ACPs with saturated chain lengths up to 16:0, being most active on intermediate chain length. The sequence is that of 3-hydroxydecanoyl-[acyl-carrier-protein] dehydratase from Escherichia coli (strain SE11).